An 838-amino-acid chain; its full sequence is Axin-2 (838 aa).

Residues 1–75 are disordered; that stretch reads MSSAVLVTLL…EGRASPDSPL (75 aa). A Tankyrase-binding motif motif is present at residues 21–30; it reads APRPPVPGEE. A compositionally biased stretch (polar residues) spans 42-55; that stretch reads KVQSTKPMPVSSNA. Residues 56–69 are compositionally biased toward basic and acidic residues; sequence RRNEDGLGEPEGRA. The 120-residue stretch at 81 to 200 folds into the RGS domain; the sequence is SLHSLLGDQD…LTSDIYLEYV (120 aa). Disordered regions lie at residues 300–333, 398–435, 450–483, 568–682, and 712–744; these read SELSSDALTDDSMSMTDSSVDGIPPYRMGSKKQL, IREDEEKEGSEQALSSRDGAPVQHPLALLPSGSYEEDP, PGCQSPGVGRYSPRSRSPDHHHHHHQQCHALLPT, GSRG…AMPP, and VASQQRDRNHPATGQAGPTSFSNPSLASEDHKE. Over residues 303–318 the composition is skewed to low complexity; it reads SSDALTDDSMSMTDSS. Positions 327-413 are interaction with GSK3B; that stretch reads MGSKKQLQRE…KEGSEQALSS (87 aa). The interval 413–476 is interaction with beta-catenin; it reads SRDGAPVQHP…PDHHHHHHQQ (64 aa). A compositionally biased stretch (polar residues) spans 727-737; the sequence is AGPTSFSNPSL. The DIX domain occupies 756–838; that stretch reads ASELIVTYFF…RILGKVERID (83 aa).

In terms of assembly, interacts with SMAD7 and RNF111. Interacts with ANKRD6. Interacts with glycogen synthase kinase-3 beta (GSK3B) and beta-catenin. The interaction between axin and beta-catenin occurs via the armadillo repeats contained in beta-catenin. Interacts with SIAH1. Interacts with SIAH2. Post-translationally, ADP-ribosylated by tankyrase TNKS and TNKS2. Poly-ADP-ribosylated protein is recognized by RNF146, followed by ubiquitination and subsequent activation of the Wnt signaling pathway. Ubiquitinated by RNF146 when poly-ADP-ribosylated, leading to its degradation and subsequent activation of the Wnt signaling pathway. Deubiquitinated by USP34, deubiquitinated downstream of beta-catenin stabilization step: deubiquitination is important Wnt signaling to positively regulate beta-catenin (CTNBB1)-mediated transcription. In terms of processing, probably phosphorylated by GSK3B and dephosphorylated by PP2A. As to expression, expressed in lung and thymus.

The protein resides in the cytoplasm. Functionally, inhibitor of the Wnt signaling pathway. Down-regulates beta-catenin. Probably facilitate the phosphorylation of beta-catenin and APC by GSK3B. The protein is Axin-2 (Axin2) of Rattus norvegicus (Rat).